The sequence spans 439 residues: N5-carboxyaminoimidazole ribonucleotide synthase (439 aa).

Residues Lys113, Lys160, 197 to 200 (EERV), Glu205, and 283 to 284 (NE) each bind ATP. An ATP-grasp domain is found at 117–313 (RRRLAALGAA…QFEQHLRAVL (197 aa)).

This sequence belongs to the PurK/PurT family. In terms of assembly, homodimer.

It catalyses the reaction 5-amino-1-(5-phospho-beta-D-ribosyl)imidazole + hydrogencarbonate + ATP = 5-carboxyamino-1-(5-phospho-D-ribosyl)imidazole + ADP + phosphate + 2 H(+). The protein operates within purine metabolism; IMP biosynthesis via de novo pathway; 5-amino-1-(5-phospho-D-ribosyl)imidazole-4-carboxylate from 5-amino-1-(5-phospho-D-ribosyl)imidazole (N5-CAIR route): step 1/2. Catalyzes the ATP-dependent conversion of 5-aminoimidazole ribonucleotide (AIR) and HCO(3)(-) to N5-carboxyaminoimidazole ribonucleotide (N5-CAIR). This Mycobacterium leprae (strain TN) protein is N5-carboxyaminoimidazole ribonucleotide synthase.